Reading from the N-terminus, the 93-residue chain is UPF0298 protein GWCH70_0997 (93 aa).

The protein belongs to the UPF0298 family.

It is found in the cytoplasm. The polypeptide is UPF0298 protein GWCH70_0997 (Geobacillus sp. (strain WCH70)).